Reading from the N-terminus, the 183-residue chain is Globin-like protein 26 (183 aa).

The tract at residues 1–25 (MGSSTSTPAPPPKKNKPEGRKADNQ) is disordered. Gly-2 carries N-myristoyl glycine lipidation. The Nuclear localization signal motif lies at 12–18 (PKKNKPE). Positions 26 to 166 (ILNSYQKSIV…VVDQLRFGYS (141 aa)) constitute a Globin domain. Residues His-77 and His-109 each coordinate heme.

This sequence belongs to the globin family. As to quaternary structure, homodimer. Occurs in an equilibrium of monomeric and dimeric forms in solution. In terms of tissue distribution, detected in the head mesodermal cell. In the tail region, detected in the stomatointestinal and anal depressor muscle cells.

The protein localises to the cytoplasm. Its subcellular location is the nucleus lamina. It is found in the cell membrane. Plays a role in electron transport. Utilizes the bis-histidyl hexacoordinated complex with iron to transfer electrons to cytochrome c and molecular oxygen. Plays a regulatory role in the periodicity of the defecation cycle under oxidative stress conditions. Not involved in imparting protection against general conditions of oxidative stress. May participate in redox reactions under anaerobic conditions. This is Globin-like protein 26 from Caenorhabditis elegans.